Here is a 188-residue protein sequence, read N- to C-terminus: Protease-associated domain-containing protein 1 (188 aa).

The N-terminal stretch at 1 to 21 (MVPGAAGWCCLVLWLPACVAA) is a signal peptide. In terms of domain architecture, PA spans 83–163 (IQDQIALVER…RSLEQHGLPW (81 aa)). Asn-171 carries an N-linked (GlcNAc...) asparagine glycan.

Post-translationally, N-glycosylated; required for efficient secretion. As to expression, highly expressed in skeletal muscle, heart and liver. Expressed at intermediate level in kidney.

The protein localises to the secreted. Plays a role in the modulation of physical activity and adiposity. This chain is Protease-associated domain-containing protein 1, found in Homo sapiens (Human).